A 288-amino-acid chain; its full sequence is Large ribosomal subunit protein uL2 (288 aa).

Residues 232–265 (GTAMNPVDHPHGGGEGKTKGKHPESPWGWKTKGY) are disordered. A compositionally biased stretch (basic and acidic residues) spans 239–255 (DHPHGGGEGKTKGKHPE).

It belongs to the universal ribosomal protein uL2 family. Part of the 50S ribosomal subunit. Forms a bridge to the 30S subunit in the 70S ribosome.

Its function is as follows. One of the primary rRNA binding proteins. Required for association of the 30S and 50S subunits to form the 70S ribosome, for tRNA binding and peptide bond formation. It has been suggested to have peptidyltransferase activity; this is somewhat controversial. Makes several contacts with the 16S rRNA in the 70S ribosome. The chain is Large ribosomal subunit protein uL2 from Hydrogenobaculum sp. (strain Y04AAS1).